Consider the following 73-residue polypeptide: MNTATGFIVLLVLATVLGCIEAGESHVREDAMGRARRGACTPTGQPCPYNESCCSGSCQEQLNENGHTVKRCV.

A signal peptide spans 1–22 (MNTATGFIVLLVLATVLGCIEA). A propeptide spanning residues 23–37 (GESHVREDAMGRARR) is cleaved from the precursor. Disulfide bonds link Cys40-Cys54, Cys47-Cys58, and Cys53-Cys72.

Belongs to the neurotoxin 08 (Shiva) family. 01 (omega toxin) subfamily. As to expression, expressed by the venom gland.

The protein resides in the secreted. Its function is as follows. Insecticidal toxin that reversibly and voltage-independently blocks both mid-low- (M-LVA) and high-voltage-activated (HVA) calcium channels (Cav) in cockroach DUM neurons. Also causes a modest block of insect sodium channel currents (Nav). Induces potent excitatory symptoms, followed by flaccid paralysis leading to death in house crickets. The protein is Omega-hexatoxin-Ar1b of Atrax robustus (Sydney funnel-web spider).